Reading from the N-terminus, the 173-residue chain is Translation initiation factor IF-3 (173 aa).

It belongs to the IF-3 family. As to quaternary structure, monomer.

Its subcellular location is the cytoplasm. Functionally, IF-3 binds to the 30S ribosomal subunit and shifts the equilibrium between 70S ribosomes and their 50S and 30S subunits in favor of the free subunits, thus enhancing the availability of 30S subunits on which protein synthesis initiation begins. The chain is Translation initiation factor IF-3 from Methylorubrum populi (strain ATCC BAA-705 / NCIMB 13946 / BJ001) (Methylobacterium populi).